The following is a 699-amino-acid chain: D-(-)-3-hydroxybutyrate oligomer hydrolase (699 aa).

The signal sequence occupies residues 1–33 (MTAIRGGSRRAPGLALALLGGVLLGACHGDENA). The active-site Charge relay system is the Ser-311.

The protein belongs to the D-(-)-3-hydroxybutyrate oligomer hydrolase family.

The protein localises to the secreted. It catalyses the reaction (3R)-hydroxybutanoate dimer + H2O = 2 (R)-3-hydroxybutanoate + H(+). Its pathway is lipid metabolism; butanoate metabolism. In terms of biological role, participates in the degradation of poly-3-hydroxybutyrate (PHB). It works downstream of poly(3-hydroxybutyrate) depolymerase, hydrolyzing D(-)-3-hydroxybutyrate oligomers of various length (3HB-oligomers) into 3HB-monomers. This is D-(-)-3-hydroxybutyrate oligomer hydrolase from Burkholderia pseudomallei (strain 1710b).